The following is a 258-amino-acid chain: Trypsin (258 aa).

Residues 1–16 form the signal peptide; that stretch reads MIRFTLALAVIGVTFA. The propeptide at 17-29 is activation peptide; the sequence is ASTPQIETNPNLE. One can recognise a Peptidase S1 domain in the interval 30–257; sequence IIGGHDANII…FRDWINEETE (228 aa). Cysteine 55 and cysteine 71 are joined by a disulfide. Histidine 70 acts as the Charge relay system in catalysis. N-linked (GlcNAc...) asparagine glycosylation occurs at asparagine 110. Catalysis depends on aspartate 117, which acts as the Charge relay system. Asparagine 130 and asparagine 188 each carry an N-linked (GlcNAc...) asparagine glycan. 2 cysteine pairs are disulfide-bonded: cysteine 182-cysteine 197 and cysteine 209-cysteine 233. The Charge relay system role is filled by serine 213.

Belongs to the peptidase S1 family. Expressed in larval carcasses and gut, and adult gut.

It is found in the secreted. It catalyses the reaction Preferential cleavage: Arg-|-Xaa, Lys-|-Xaa.. The sequence is that of Trypsin from Phaedon cochleariae (Mustard beetle).